A 266-amino-acid polypeptide reads, in one-letter code: RNA polymerase II subunit A C-terminal domain phosphatase ssu-72 (266 aa).

Residues 1–31 (MSAVDTPTGAASSSKPDQNEQNGQNGGREDS) form a disordered region. Residues 9–23 (GAASSSKPDQNEQNG) show a composition bias toward polar residues.

This sequence belongs to the SSU72 phosphatase family. As to quaternary structure, component of the cleavage and polyadenylation factor (CPF) complex.

The protein localises to the nucleus. The catalysed reaction is O-phospho-L-seryl-[protein] + H2O = L-seryl-[protein] + phosphate. The enzyme catalyses O-phospho-L-threonyl-[protein] + H2O = L-threonyl-[protein] + phosphate. Processively dephosphorylates Ser-5 of the heptad repeats YSPTSPS in the C-terminal domain of the largest RNA polymerase II subunit (rpb-1). Its function is as follows. Component of the cleavage and polyadenylation factor (CPF) complex, which plays a key role in polyadenylation-dependent pre-mRNA 3'-end formation and cooperates with cleavage factors including the CFIA complex and NAB4/CFIB. Ssu-72 is required for 3'-end formation of snoRNAs. This is RNA polymerase II subunit A C-terminal domain phosphatase ssu-72 (ssu-72) from Neurospora crassa (strain ATCC 24698 / 74-OR23-1A / CBS 708.71 / DSM 1257 / FGSC 987).